A 345-amino-acid polypeptide reads, in one-letter code: AP2-like ethylene-responsive transcription factor At1g16060 (345 aa).

The interval 15 to 62 (TRQSKKTSVENETGDDQSATSVVLKAKRKRRSQPRDAPPQRSSVHRGV) is disordered. DNA-binding regions (AP2/ERF) lie at residues 58–124 (VHRG…LNFP) and 160–218 (KYRG…TNFD). The segment at 243-302 (HSDLSPFIKPNHESDLSQSQSSSEDNDDRKTKLLKSSPLVAEEVIGPSTPPEIAPPRRSF) is disordered.

Belongs to the AP2/ERF transcription factor family. AP2 subfamily.

It localises to the nucleus. In terms of biological role, probably acts as a transcriptional activator. Binds to the GCC-box pathogenesis-related promoter element. May be involved in the regulation of gene expression by stress factors and by components of stress signal transduction pathways. The sequence is that of AP2-like ethylene-responsive transcription factor At1g16060 from Arabidopsis thaliana (Mouse-ear cress).